A 197-amino-acid chain; its full sequence is Phosphoheptose isomerase (197 aa).

Residues 36–197 (MVNALLNEGK…IDRQLFGSEE (162 aa)) enclose the SIS domain. Substrate is bound at residue 51–53 (NGG). His60 and Glu64 together coordinate Zn(2+). Substrate contacts are provided by residues Glu64, 93 to 94 (ND), 119 to 121 (STS), Ser124, and Gln174. Zn(2+)-binding residues include Gln174 and His182.

Belongs to the SIS family. GmhA subfamily. Homotetramer. The cofactor is Zn(2+).

It localises to the cytoplasm. The catalysed reaction is 2 D-sedoheptulose 7-phosphate = D-glycero-alpha-D-manno-heptose 7-phosphate + D-glycero-beta-D-manno-heptose 7-phosphate. The protein operates within carbohydrate biosynthesis; D-glycero-D-manno-heptose 7-phosphate biosynthesis; D-glycero-alpha-D-manno-heptose 7-phosphate and D-glycero-beta-D-manno-heptose 7-phosphate from sedoheptulose 7-phosphate: step 1/1. Functionally, catalyzes the isomerization of sedoheptulose 7-phosphate in D-glycero-D-manno-heptose 7-phosphate. This chain is Phosphoheptose isomerase, found in Pseudomonas aeruginosa (strain LESB58).